A 483-amino-acid polypeptide reads, in one-letter code: Proton-coupled amino acid transporter 2 (483 aa).

Residues Met-1–Gln-58 lie on the Cytoplasmic side of the membrane. The span at Ser-26 to Thr-36 shows a compositional bias: basic and acidic residues. The tract at residues Ser-26–Ala-46 is disordered. Residues Ala-59 to Val-79 traverse the membrane as a helical segment. The Extracellular portion of the chain corresponds to Lys-80–Asn-81. A helical membrane pass occupies residues Ala-82–Met-102. The Cytoplasmic segment spans residues His-103–His-148. Residues Ile-149–Leu-169 form a helical membrane-spanning segment. Residues Ala-170–Pro-197 lie on the Extracellular side of the membrane. The helical transmembrane segment at Thr-198–Ile-218 threads the bilayer. The Cytoplasmic portion of the chain corresponds to Arg-219–Arg-222. The helical transmembrane segment at Ile-223–Ile-243 threads the bilayer. Residues Gln-244–Thr-264 are Extracellular-facing. The helical transmembrane segment at Tyr-265 to Leu-285 threads the bilayer. The Cytoplasmic segment spans residues Glu-286–Pro-296. A helical transmembrane segment spans residues Ala-297–Gly-317. The Extracellular segment spans residues Tyr-318–Gly-349. The helical transmembrane segment at Ile-350–Ile-370 threads the bilayer. Residues Ser-371–Leu-379 are Cytoplasmic-facing. A helical transmembrane segment spans residues Pro-380 to Ile-400. Residues Pro-401–Asp-404 lie on the Extracellular side of the membrane. Residues Leu-405–Leu-425 form a helical membrane-spanning segment. Over Leu-426–Ser-437 the chain is Cytoplasmic. A helical membrane pass occupies residues Pro-438–Gly-458. Residues Thr-459–Arg-483 lie on the Extracellular side of the membrane.

The protein belongs to the amino acid/polyamine transporter 2 family. Abundantly expressed in kidney and muscle. Expressed in the S1 segment of the proximal tubule close to the glomerulus.

Its subcellular location is the cell membrane. It localises to the endoplasmic reticulum membrane. It is found in the recycling endosome membrane. It catalyses the reaction glycine(in) + H(+)(in) = glycine(out) + H(+)(out). The catalysed reaction is L-alanine(in) + H(+)(in) = L-alanine(out) + H(+)(out). The enzyme catalyses D-alanine(in) + H(+)(in) = D-alanine(out) + H(+)(out). It carries out the reaction L-proline(out) + H(+)(out) = L-proline(in) + H(+)(in). It catalyses the reaction D-proline(out) + H(+)(out) = D-proline(in) + H(+)(in). The catalysed reaction is 4-hydroxy-L-proline(in) + H(+)(in) = 4-hydroxy-L-proline(out) + H(+)(out). The enzyme catalyses L-serine(in) + H(+)(in) = L-serine(out) + H(+)(out). It carries out the reaction D-serine(out) + H(+)(out) = D-serine(in) + H(+)(in). It catalyses the reaction beta-alanine(in) + H(+)(in) = beta-alanine(out) + H(+)(out). The catalysed reaction is 4-aminobutanoate(in) + H(+)(in) = 4-aminobutanoate(out) + H(+)(out). The enzyme catalyses sarcosine(in) + H(+)(in) = sarcosine(out) + H(+)(out). It carries out the reaction N,N-dimethylglycine(in) + H(+)(in) = N,N-dimethylglycine(out) + H(+)(out). Its function is as follows. Electrogenic proton/amino acid symporter with a high selectivity for the small side chains amino acids glycine, alanine and proline, where both L- and D-enantiomers are transported. Extension of the backbone length, as in beta-alanine and 4-aminobutanoate or methylation of the amino group, as in sarcosine and N,N-dimethylglycine, are also tolerated but decrease transport efficiency. A free carboxyl group is preferred. The polypeptide is Proton-coupled amino acid transporter 2 (Homo sapiens (Human)).